Here is a 513-residue protein sequence, read N- to C-terminus: Na(+)/H(+) antiporter NhaB (513 aa).

12 helical membrane-spanning segments follow: residues 23 to 43 (LALI…PFVA), 52 to 72 (IFTL…LLAI), 97 to 117 (LLLM…LFIF), 120 to 140 (LLLS…AAAF), 144 to 164 (FLDA…FYGI), 202 to 222 (LMMH…VGEP), 238 to 258 (FFLR…LTCL), 303 to 323 (AIIG…VGLI), 348 to 368 (TESL…AVII), 391 to 411 (LFYI…VGTI), 447 to 467 (ATPN…APLI), and 475 to 495 (VWMA…CVEF).

The protein belongs to the NhaB Na(+)/H(+) (TC 2.A.34) antiporter family.

The protein localises to the cell inner membrane. It carries out the reaction 2 Na(+)(in) + 3 H(+)(out) = 2 Na(+)(out) + 3 H(+)(in). In terms of biological role, na(+)/H(+) antiporter that extrudes sodium in exchange for external protons. The chain is Na(+)/H(+) antiporter NhaB from Escherichia coli (strain 55989 / EAEC).